We begin with the raw amino-acid sequence, 107 residues long: Sulfurtransferase Alvin_2599 (107 aa).

The 89-residue stretch at 16 to 104 (DTEDVLLVDI…WARHGLPIVA (89 aa)) folds into the Rhodanese domain. Cys-64 serves as the catalytic Cysteine persulfide intermediate.

As to quaternary structure, monomer.

The protein resides in the cytoplasm. It functions in the pathway energy metabolism; sulfur metabolism. In terms of biological role, sulfur carrier protein involved in sulfur trafficking for oxidative dissimilatory sulfur metabolism. Component of a sulfur relay system that starts with the sulfur-mobilizing rhodanese-like protein Rhd_2599 (Alvin_2599), which transfers the sulfur from a low-molecular-weight thiol, maybe glutathione, to the TusA protein (Alvin_2600); TusA serves as the sulfur donor for DsrEFH, which persulfurates DsrC; persulfurated DsrC very probably serves as a direct substrate for reverse-acting sulfite reductase, DsrAB. Is able to catalyze the sulfur transfer reaction from thiosulfate or glutathione (GSSH) to cyanide in vitro, however, thiosulfate is unlikely an in vivo substrate. In Allochromatium vinosum (strain ATCC 17899 / DSM 180 / NBRC 103801 / NCIMB 10441 / D) (Chromatium vinosum), this protein is Sulfurtransferase Alvin_2599.